The following is a 590-amino-acid chain: MEKMQRTVTCGGLNKDFAGKTVVLNGWIHRKRDHGGITFLNLRDRYGLTQVVVDDDASEDLKALAVSLKQEFCIAVEGLVRPRPDSMINKEMATGEIEVKALKIEVLSKSEVLPFQIDEKTNANEDLRLKYRYLDLRSKAMQEHIMLRSKFTFAVREFLTSKDFLEIETPTFIKSTPEGARDYLVPSRLYPGKFYALPQSPQIYKQILMVSGFDKYFQIARCYRDEDARGDRQPEFTQIDLEMSFASREDVLSLTEGMMQYAFKKSINVDLPKTFERISYDEAIDIYGTDKPDLRFEMKMQDAAFMAEIGNFAVFKDAVSLGGAVKALVVKGQAEAYSRKKIEELEAAAKIYKAKGLAWIKVTEGGAKLEGGVSKFFEGKEAEICSKLGAEKGDLILFVADKYKIACTALGAVRSKLGKDLGLLNPAEFKFAWIVDFPLFEWNEEENKWDPAHHMFSAPQEKYIATMEENPEPVKGDLYDLVLNGYEVASGSIRIHNPELQKRIFKIVGFDESEAEKKFGFLTEAFKYGAPPHGGIAPGLDRIVMIMAGETSIKEVIAFPKNSFAVSPMDDSPSEVDQKQLDELHLVIKE.

Glutamate 178 contributes to the L-aspartate binding site. Positions 202–205 (QIYK) are aspartate. L-aspartate is bound at residue arginine 224. Residues 224-226 (RDE) and glutamine 233 contribute to the ATP site. Histidine 453 is a binding site for L-aspartate. Position 487 (glutamate 487) interacts with ATP. L-aspartate is bound at residue arginine 494. 539-542 (GLDR) is an ATP binding site.

The protein belongs to the class-II aminoacyl-tRNA synthetase family. Type 1 subfamily. Homodimer.

The protein localises to the cytoplasm. It carries out the reaction tRNA(Asx) + L-aspartate + ATP = L-aspartyl-tRNA(Asx) + AMP + diphosphate. Its function is as follows. Aspartyl-tRNA synthetase with relaxed tRNA specificity since it is able to aspartylate not only its cognate tRNA(Asp) but also tRNA(Asn). Reaction proceeds in two steps: L-aspartate is first activated by ATP to form Asp-AMP and then transferred to the acceptor end of tRNA(Asp/Asn). The protein is Aspartate--tRNA(Asp/Asn) ligase of Treponema denticola (strain ATCC 35405 / DSM 14222 / CIP 103919 / JCM 8153 / KCTC 15104).